The chain runs to 257 residues: THAP domain-containing protein 10 (257 aa).

A THAP-type zinc finger spans residues 1–90 (MPARCVAAHC…LVAGAVPTLH (90 aa)). Residues 154 to 168 (QPHADNPSNTVTSVP) are compositionally biased toward polar residues. Residues 154–178 (QPHADNPSNTVTSVPTHCEEGPVHK) are disordered.

This chain is THAP domain-containing protein 10 (THAP10), found in Homo sapiens (Human).